Consider the following 251-residue polypeptide: Carbohydrate deacetylase (251 aa).

Residues histidine 59 and histidine 122 each coordinate Mg(2+).

This sequence belongs to the YdjC deacetylase family. Homodimer. It depends on Mg(2+) as a cofactor.

In terms of biological role, probably catalyzes the deacetylation of acetylated carbohydrates an important step in the degradation of oligosaccharides. In Vibrio campbellii (strain ATCC BAA-1116), this protein is Carbohydrate deacetylase.